A 90-amino-acid chain; its full sequence is DNA-binding protein HU (90 aa).

It belongs to the bacterial histone-like protein family. As to quaternary structure, homodimer.

Its function is as follows. Histone-like DNA-binding protein which is capable of wrapping DNA to stabilize it, and thus to prevent its denaturation under extreme environmental conditions. The sequence is that of DNA-binding protein HU (hup) from Pasteurella multocida (strain Pm70).